A 241-amino-acid chain; its full sequence is ATP synthase subunit a (241 aa).

The next 7 helical transmembrane spans lie at 27-47, 52-72, 87-107, 112-132, 142-162, 175-195, and 198-218; these read NCSL…CWAL, VVPG…ANTL, VMTT…PFGF, HLSV…VIGF, IFLP…IKLF, LAAN…FVLK, and LVLA…EIFV.

The protein belongs to the ATPase A chain family. As to quaternary structure, F-type ATPases have 2 components, CF(1) - the catalytic core - and CF(0) - the membrane proton channel. CF(1) has five subunits: alpha(3), beta(3), gamma(1), delta(1), epsilon(1). CF(0) has three main subunits: a(1), b(2) and c(9-12). The alpha and beta chains form an alternating ring which encloses part of the gamma chain. CF(1) is attached to CF(0) by a central stalk formed by the gamma and epsilon chains, while a peripheral stalk is formed by the delta and b chains.

It localises to the cell inner membrane. Its function is as follows. Key component of the proton channel; it plays a direct role in the translocation of protons across the membrane. This Anaplasma marginale (strain St. Maries) protein is ATP synthase subunit a.